The sequence spans 123 residues: Large ribosomal subunit protein bL12 (123 aa).

This sequence belongs to the bacterial ribosomal protein bL12 family. Homodimer. Part of the ribosomal stalk of the 50S ribosomal subunit. Forms a multimeric L10(L12)X complex, where L10 forms an elongated spine to which 2 to 4 L12 dimers bind in a sequential fashion. Binds GTP-bound translation factors.

Forms part of the ribosomal stalk which helps the ribosome interact with GTP-bound translation factors. Is thus essential for accurate translation. The protein is Large ribosomal subunit protein bL12 of Shewanella amazonensis (strain ATCC BAA-1098 / SB2B).